The primary structure comprises 287 residues: ATP synthase gamma chain (287 aa).

This sequence belongs to the ATPase gamma chain family. In terms of assembly, F-type ATPases have 2 components, CF(1) - the catalytic core - and CF(0) - the membrane proton channel. CF(1) has five subunits: alpha(3), beta(3), gamma(1), delta(1), epsilon(1). CF(0) has three main subunits: a, b and c.

It is found in the cell inner membrane. In terms of biological role, produces ATP from ADP in the presence of a proton gradient across the membrane. The gamma chain is believed to be important in regulating ATPase activity and the flow of protons through the CF(0) complex. This is ATP synthase gamma chain from Escherichia fergusonii (strain ATCC 35469 / DSM 13698 / CCUG 18766 / IAM 14443 / JCM 21226 / LMG 7866 / NBRC 102419 / NCTC 12128 / CDC 0568-73).